We begin with the raw amino-acid sequence, 148 residues long: SsrA-binding protein (148 aa).

Basic and acidic residues predominate over residues glutamate 129–arginine 142. The interval glutamate 129–threonine 148 is disordered.

This sequence belongs to the SmpB family.

It is found in the cytoplasm. Its function is as follows. Required for rescue of stalled ribosomes mediated by trans-translation. Binds to transfer-messenger RNA (tmRNA), required for stable association of tmRNA with ribosomes. tmRNA and SmpB together mimic tRNA shape, replacing the anticodon stem-loop with SmpB. tmRNA is encoded by the ssrA gene; the 2 termini fold to resemble tRNA(Ala) and it encodes a 'tag peptide', a short internal open reading frame. During trans-translation Ala-aminoacylated tmRNA acts like a tRNA, entering the A-site of stalled ribosomes, displacing the stalled mRNA. The ribosome then switches to translate the ORF on the tmRNA; the nascent peptide is terminated with the 'tag peptide' encoded by the tmRNA and targeted for degradation. The ribosome is freed to recommence translation, which seems to be the essential function of trans-translation. The polypeptide is SsrA-binding protein (Burkholderia lata (strain ATCC 17760 / DSM 23089 / LMG 22485 / NCIMB 9086 / R18194 / 383)).